A 741-amino-acid polypeptide reads, in one-letter code: Transketolase, chloroplastic (741 aa).

Residues 1–19 (MAASSSLSTLSHHQTLLSH) are compositionally biased toward low complexity. Residues 1–33 (MAASSSLSTLSHHQTLLSHPKTHLPTTPASSLL) are disordered. A chloroplast-targeting transit peptide spans 1-66 (MAASSSLSTL…VGSASAVVRA (66 aa)). Residues 24-33 (LPTTPASSLL) are compositionally biased toward polar residues. Histidine 103 lines the substrate pocket. Residues histidine 143 and 192–194 (GPL) each bind thiamine diphosphate. Aspartate 233 contributes to the Mg(2+) binding site. Positions 234 and 263 each coordinate thiamine diphosphate. Residues asparagine 263 and isoleucine 265 each coordinate Mg(2+). Residues histidine 340, arginine 434, and serine 461 each coordinate substrate. Histidine 340 is a thiamine diphosphate binding site. Positions 488 and 515 each coordinate thiamine diphosphate. The Proton donor role is filled by glutamate 488. Positions 539, 547, and 598 each coordinate substrate.

Belongs to the transketolase family. In terms of assembly, homodimer. Requires Mg(2+) as cofactor. It depends on Ca(2+) as a cofactor. Mn(2+) is required as a cofactor. Co(2+) serves as cofactor. The cofactor is thiamine diphosphate.

It localises to the plastid. The protein resides in the chloroplast thylakoid membrane. It carries out the reaction D-sedoheptulose 7-phosphate + D-glyceraldehyde 3-phosphate = aldehydo-D-ribose 5-phosphate + D-xylulose 5-phosphate. The protein operates within carbohydrate biosynthesis; Calvin cycle. Its function is as follows. Catalyzes the reversible transfer of a two-carbon ketol group from fructose-6-phosphate or sedoheptulose-7-phosphate to glyceraldehyde-3-phosphate to yield xylulose-5-phosphate and erythrose-4-phosphate or ribose-5-phosphate, respectively. The protein is Transketolase, chloroplastic of Spinacia oleracea (Spinach).